Here is a 292-residue protein sequence, read N- to C-terminus: Ribosomal protein L11 methyltransferase (292 aa).

Thr145, Gly166, Asp188, and Asn229 together coordinate S-adenosyl-L-methionine.

It belongs to the methyltransferase superfamily. PrmA family.

The protein resides in the cytoplasm. The enzyme catalyses L-lysyl-[protein] + 3 S-adenosyl-L-methionine = N(6),N(6),N(6)-trimethyl-L-lysyl-[protein] + 3 S-adenosyl-L-homocysteine + 3 H(+). Methylates ribosomal protein L11. The protein is Ribosomal protein L11 methyltransferase of Nitrosococcus oceani (strain ATCC 19707 / BCRC 17464 / JCM 30415 / NCIMB 11848 / C-107).